An 84-amino-acid chain; its full sequence is U8-theraphotoxin-Hhn1c 3 (84 aa).

The signal sequence occupies residues 1-21 (MKVALIVCLVWVMAMMELVSC). 5 disulfides stabilise this stretch: Cys-23/Cys-35, Cys-29/Cys-44, Cys-34/Cys-67, Cys-54/Cys-75, and Cys-69/Cys-81.

The protein belongs to the AVIT (prokineticin) family. In terms of tissue distribution, expressed by the venom gland.

The protein localises to the secreted. The sequence is that of U8-theraphotoxin-Hhn1c 3 from Cyriopagopus hainanus (Chinese bird spider).